The primary structure comprises 432 residues: Adenosylhomocysteinase (432 aa).

An N-acetylserine modification is found at S2. Positions 57, 131, and 156 each coordinate substrate. 157–159 (TTT) is an NAD(+) binding site. S183 carries the post-translational modification Phosphoserine. Residues K186 and D190 each coordinate substrate. K186 carries the N6-(2-hydroxyisobutyryl)lysine modification. A Phosphotyrosine modification is found at Y193. Residues 222-227 (GDVGKG), E243, N248, 299-301 (IGH), N346, and H353 contribute to the NAD(+) site.

Belongs to the adenosylhomocysteinase family. Homotetramer. Interaction with AHCYL1. Requires NAD(+) as cofactor.

It localises to the cytoplasm. Its subcellular location is the melanosome. The protein resides in the nucleus. It is found in the endoplasmic reticulum. It catalyses the reaction S-adenosyl-L-homocysteine + H2O = L-homocysteine + adenosine. Its pathway is amino-acid biosynthesis; L-homocysteine biosynthesis; L-homocysteine from S-adenosyl-L-homocysteine: step 1/1. Functionally, catalyzes the hydrolysis of S-adenosyl-L-homocysteine to form adenosine and homocysteine. Binds copper ions. The polypeptide is Adenosylhomocysteinase (AHCY) (Homo sapiens (Human)).